Consider the following 475-residue polypeptide: Cobyric acid synthase (475 aa).

The 188-residue stretch at 244-431 folds into the GATase cobBQ-type domain; sequence KLNVVVPVLT…LHGFFDEADV (188 aa). The active-site Nucleophile is the C325. H423 is a catalytic residue.

The protein belongs to the CobB/CobQ family. CobQ subfamily.

Its pathway is cofactor biosynthesis; adenosylcobalamin biosynthesis. In terms of biological role, catalyzes amidations at positions B, D, E, and G on adenosylcobyrinic A,C-diamide. NH(2) groups are provided by glutamine, and one molecule of ATP is hydrogenolyzed for each amidation. The polypeptide is Cobyric acid synthase (Vibrio campbellii (strain ATCC BAA-1116)).